The primary structure comprises 347 residues: S-adenosylmethionine:tRNA ribosyltransferase-isomerase (347 aa).

Belongs to the QueA family. In terms of assembly, monomer.

The protein resides in the cytoplasm. The enzyme catalyses 7-aminomethyl-7-carbaguanosine(34) in tRNA + S-adenosyl-L-methionine = epoxyqueuosine(34) in tRNA + adenine + L-methionine + 2 H(+). The protein operates within tRNA modification; tRNA-queuosine biosynthesis. Its function is as follows. Transfers and isomerizes the ribose moiety from AdoMet to the 7-aminomethyl group of 7-deazaguanine (preQ1-tRNA) to give epoxyqueuosine (oQ-tRNA). This is S-adenosylmethionine:tRNA ribosyltransferase-isomerase from Bordetella bronchiseptica (strain ATCC BAA-588 / NCTC 13252 / RB50) (Alcaligenes bronchisepticus).